A 199-amino-acid polypeptide reads, in one-letter code: Neurotrophic factor BDNF precursor form (199 aa).

A disordered region spans residues 1 to 23 (GQGSLAYPGLRTQGNLETLSGPN). Residues 1-100 (GQGSLAYPGL…AANMSMRVRR (100 aa)) constitute a propeptide that is removed on maturation. Polar residues predominate over residues 12 to 23 (TQGNLETLSGPN). The N-linked (GlcNAc...) asparagine glycan is linked to Asn93. The cysteines at positions 113 and 180 are disulfide-linked.

This sequence belongs to the NGF-beta family.

Its subcellular location is the secreted. Its function is as follows. Promotes the survival of neuronal populations that are all located either in the central nervous system or directly connected to it. This chain is Neurotrophic factor BDNF precursor form (BDNF), found in Eunectes notaeus (Yellow anaconda).